Consider the following 396-residue polypeptide: Protein nipi-4 (396 aa).

Topologically, residues 1 to 20 (MELDHTPPPSVLNDNCSASY) are extracellular. Residue Asn-15 is glycosylated (N-linked (GlcNAc...) asparagine). The chain crosses the membrane as a helical span at residues 21–41 (MTPYATVIAMSGLYLLAIFYF). Residues 42–396 (CKKSKKMCQP…EHHCQSVIHY (355 aa)) lie on the Cytoplasmic side of the membrane. The Protein kinase domain occupies 81 to 368 (EVDDFQIGQT…SRLSELHHIV (288 aa)). Residues 87 to 95 (IGQTADGFI) and Lys-111 each bind ATP.

The protein belongs to the protein kinase superfamily. Tyr protein kinase family. In terms of tissue distribution, expressed in the epidermis of larvae and adults and in vulval and rectal cells.

Its subcellular location is the membrane. In terms of biological role, pseudokinase which plays a role in resistance to fungal infection by promoting expression of antimicrobial peptides (nlp-29, nlp-31, nlp-34, cnc-1, cnc-2 and cnc-4) in the epidermis. In addition, up-regulates nlp-29 expression upon physical wounding and in response to phorbol ester PMA treatment. This chain is Protein nipi-4, found in Caenorhabditis elegans.